The sequence spans 598 residues: IQ calmodulin-binding motif-containing protein 1 (598 aa).

Residues 1-157 (MKPTGTDPRI…SLFWLLGGHV (157 aa)) are interaction with BBS1, BBS8 and BBS9. An interaction with CEP290, BBS1, BBS2, BBS4, BBS5, BBS7, BBS8 and BBS9 region spans residues 287–598 (QEVEEQKLHQ…NLFIGGTKPP (312 aa)). IQ domains are found at residues 294–317 (LHQAACLIQAYWKGFQTRKRLKKL), 318–338 (PSAVIALQRSFRSKRSKMLLE), 387–416 (EEKSALIIQKHWRGYRERKNFHQQRQSLIE), and 417–437 (YKAAVTLQRAALKFLAKCRKK). Positions 336–373 (LLEINRQKEEEDLKLQLQLQRQRAMRLSRELQLSMLEI) form a coiled coil. Positions 530–598 (AEGKEPELFL…NLFIGGTKPP (69 aa)) are interaction with BBS1, BBS2, BBS4, BBS7, BBS8 and BBS9. Ser572 is modified (phosphoserine).

As to quaternary structure, interacts with CEP290/NPHP6; IQCB1/NPHP5 and CEP290 are proposed to form a functional NPHP5-6 module/NPHP6; localized to the centrosome. Interacts with calmodulin, ATXN10. Interacts with NPHP1, INVS, NPHP4 and RPGRIP1L; these interactions likely require additional interactors. Associates with the BBSome complex; interacts with BBS1, BBS2, BBS4, BBS5, BBS7, BBS8 and BBS9. In terms of tissue distribution, ubiquitously expressed in fetal and adult tissues. Localized to the outer segments and connecting cilia of photoreceptor cells. Up-regulated in a number of primary colorectal and gastric tumors.

The protein resides in the cytoplasm. The protein localises to the cytoskeleton. It localises to the microtubule organizing center. Its subcellular location is the centrosome. It is found in the centriole. Involved in ciliogenesis. The function in an early step in cilia formation depends on its association with CEP290/NPHP6. Involved in regulation of the BBSome complex integrity, specifically for presence of BBS2 and BBS5 in the complex, and in ciliary targeting of selected BBSome cargos. May play a role in controlling entry of the BBSome complex to cilia possibly implicating CEP290/NPHP6. This chain is IQ calmodulin-binding motif-containing protein 1 (IQCB1), found in Homo sapiens (Human).